We begin with the raw amino-acid sequence, 160 residues long: Ribosomal RNA large subunit methyltransferase H (160 aa).

Residues leucine 76, glycine 108, and 127 to 132 (LGKMTW) contribute to the S-adenosyl-L-methionine site.

This sequence belongs to the RNA methyltransferase RlmH family. Homodimer.

Its subcellular location is the cytoplasm. It carries out the reaction pseudouridine(1915) in 23S rRNA + S-adenosyl-L-methionine = N(3)-methylpseudouridine(1915) in 23S rRNA + S-adenosyl-L-homocysteine + H(+). Specifically methylates the pseudouridine at position 1915 (m3Psi1915) in 23S rRNA. The polypeptide is Ribosomal RNA large subunit methyltransferase H (Sinorhizobium fredii (strain NBRC 101917 / NGR234)).